Consider the following 347-residue polypeptide: Cytoplasmic tRNA 2-thiolation protein 1 (347 aa).

Serine 200 is modified (phosphoserine). A disordered region spans residues 315–347; that stretch reads LAIGKGRRGLDEEGPPREPQPSRPLTSEPVPDF.

Belongs to the TtcA family. CTU1/NCS6/ATPBD3 subfamily. Component of a complex at least composed of URM1, CTU2/NCS2 and CTU1/ATPBD3. May form a heterodimer with CTU2/NCS2.

It localises to the cytoplasm. The protein operates within tRNA modification; 5-methoxycarbonylmethyl-2-thiouridine-tRNA biosynthesis. Functionally, plays a central role in 2-thiolation of mcm(5)S(2)U at tRNA wobble positions of tRNA(Lys), tRNA(Glu) and tRNA(Gln). Directly binds tRNAs and probably acts by catalyzing adenylation of tRNAs, an intermediate required for 2-thiolation. It is unclear whether it acts as a sulfurtransferase that transfers sulfur from thiocarboxylated URM1 onto the uridine of tRNAs at wobble position. This is Cytoplasmic tRNA 2-thiolation protein 1 from Bos taurus (Bovine).